The following is a 399-amino-acid chain: L-methionine gamma-lyase (399 aa).

Pyridoxal 5'-phosphate is bound by residues 59 to 61 (YTR) and 89 to 90 (GI). Position 114 (Y114) interacts with substrate. Residue 209-211 (SAT) coordinates pyridoxal 5'-phosphate. K212 carries the post-translational modification N6-(pyridoxal phosphate)lysine. Residue R376 participates in substrate binding.

The protein belongs to the trans-sulfuration enzymes family. L-methionine gamma-lyase subfamily. As to quaternary structure, homotetramer; dimer of active dimers. Pyridoxal 5'-phosphate is required as a cofactor.

It catalyses the reaction L-methionine + H2O = methanethiol + 2-oxobutanoate + NH4(+). It carries out the reaction L-homocysteine + H2O = 2-oxobutanoate + hydrogen sulfide + NH4(+) + H(+). In terms of biological role, catalyzes the alpha,gamma-elimination of L-methionine to produce methanethiol, 2-oxobutanoate and ammonia; methanethiol (methyl mercaptan) is considered to be one of the main causes of the oral malodor in periodontal disease and may also play a role in the pathogenicity of P.gingivalis in that disease. Is also able to catalyze the alpha,gamma-elimination of L-homocysteine. This is L-methionine gamma-lyase from Porphyromonas gingivalis (strain ATCC BAA-308 / W83).